The following is a 412-amino-acid chain: Putative competence-damage inducible protein (412 aa).

Belongs to the CinA family.

This chain is Putative competence-damage inducible protein, found in Bacillus cereus (strain B4264).